Reading from the N-terminus, the 464-residue chain is Protein FAM90A24 (464 aa).

Disordered stretches follow at residues 1 to 42 (MMAR…DPRL), 69 to 389 (VPAT…HDGA), and 415 to 437 (HSPE…SEAP). 2 stretches are compositionally biased toward basic and acidic residues: residues 74-89 (GKKE…KPRG) and 97-114 (NKDK…DPQR). Residues 180–197 (LASLSPLRKASLSSSSSL) are compositionally biased toward low complexity.

This sequence belongs to the FAM90 family.

The protein is Protein FAM90A24 of Homo sapiens (Human).